An 82-amino-acid chain; its full sequence is Small ribosomal subunit protein bS16 (82 aa).

Belongs to the bacterial ribosomal protein bS16 family.

This Pasteurella multocida (strain Pm70) protein is Small ribosomal subunit protein bS16.